The primary structure comprises 74 residues: Metallothionein-like protein type 2 (74 aa).

This sequence belongs to the metallothionein superfamily. Type 15 family.

Its function is as follows. Metallothioneins have a high content of cysteine residues that bind various heavy metals. In Nicotiana plumbaginifolia (Leadwort-leaved tobacco), this protein is Metallothionein-like protein type 2.